The sequence spans 755 residues: Actin-related protein 5 (755 aa).

Position 7 is a phosphoserine (serine 7). Lysine 12 is covalently cross-linked (Glycyl lysine isopeptide (Lys-Gly) (interchain with G-Cter in ubiquitin)). Threonine 24 bears the Phosphothreonine mark. Serine 383 bears the Phosphoserine mark. The tract at residues 418–444 is disordered; it reads QRFLKASQDARQKAKEEKERVAKEEEE. Residues 425–444 show a composition bias toward basic and acidic residues; the sequence is QDARQKAKEEKERVAKEEEE.

This sequence belongs to the actin family. As to quaternary structure, component of the chromatin-remodeling INO80 complex, at least composed of ARP4, ARP5, ARP8, RVB1, RVB2, TAF14, NHP10, IES1, IES3, IES4, IES6, ACT1, IES2, IES5 and INO80.

It localises to the nucleus. Functionally, probably involved in transcription regulation via its interaction with the INO80 complex, a chromatin remodeling complex. The polypeptide is Actin-related protein 5 (ARP5) (Saccharomyces cerevisiae (strain ATCC 204508 / S288c) (Baker's yeast)).